The primary structure comprises 180 residues: Large ribosomal subunit protein uL5 (180 aa).

This sequence belongs to the universal ribosomal protein uL5 family. Part of the 50S ribosomal subunit; part of the 5S rRNA/L5/L18/L25 subcomplex. Contacts the 5S rRNA and the P site tRNA. Forms a bridge to the 30S subunit in the 70S ribosome.

This is one of the proteins that bind and probably mediate the attachment of the 5S RNA into the large ribosomal subunit, where it forms part of the central protuberance. In the 70S ribosome it contacts protein S13 of the 30S subunit (bridge B1b), connecting the 2 subunits; this bridge is implicated in subunit movement. Contacts the P site tRNA; the 5S rRNA and some of its associated proteins might help stabilize positioning of ribosome-bound tRNAs. The chain is Large ribosomal subunit protein uL5 from Moorella thermoacetica (strain ATCC 39073 / JCM 9320).